We begin with the raw amino-acid sequence, 214 residues long: Ceramide-1-phosphate transfer protein (214 aa).

5 residues coordinate an N-acylsphingoid base 1-phosphate: Asp56, Lys60, Arg106, Arg110, and His150.

This sequence belongs to the GLTP family. Ubiquitous. Detected in heart, brain, placenta, lung, liver, skeletal muscle, kidney, pancreas, spleen, thymus, prostate, testis, ovary, small intestine, colon and peripheral blood leukocytes.

The protein resides in the cytoplasm. The protein localises to the cytosol. It localises to the golgi apparatus. It is found in the trans-Golgi network membrane. Its subcellular location is the cell membrane. The protein resides in the endosome membrane. The protein localises to the nucleus outer membrane. It catalyses the reaction N-(hexadecanoyl)-sphing-4-enine-1-phosphate(in) = N-(hexadecanoyl)-sphing-4-enine-1-phosphate(out). The enzyme catalyses N-(9Z-octadecenoyl)-sphing-4-enine-1-phosphate(in) = N-(9Z-octadecenoyl)-sphing-4-enine-1-phosphate(out). Mediates the intracellular transfer of ceramide-1-phosphate (C1P) between organelle membranes and the cell membrane. Required for normal structure of the Golgi stacks. Can bind phosphoceramides with a variety of aliphatic chains, but has a preference for lipids with saturated C16:0 or monounsaturated C18:1 aliphatic chains, and is inefficient with phosphoceramides containing lignoceryl (C24:0). Plays a role in the regulation of the cellular levels of ceramide-1-phosphate, and thereby contributes to the regulation of phospholipase PLA2G4A activity and the release of arachidonic acid. Has no activity with galactosylceramide, lactosylceramide, sphingomyelin, phosphatidylcholine, phosphatidic acid and ceramide. C1P transfer is stimulated by phosphatidylserine in C1P source vesicles. Regulates autophagy, inflammasome mediated IL1B and IL18 processing, and pyroptosis, but not apoptosis. The chain is Ceramide-1-phosphate transfer protein from Homo sapiens (Human).